Consider the following 294-residue polypeptide: DNA adenine methyltransferase YhdJ (294 aa).

The tract at residues 275-294 (TGNLSKRSRLSEVDPDLITK) is disordered. Over residues 283–294 (RLSEVDPDLITK) the composition is skewed to basic and acidic residues.

Belongs to the N(4)/N(6)-methyltransferase family.

The enzyme catalyses a 2'-deoxyadenosine in DNA + S-adenosyl-L-methionine = an N(6)-methyl-2'-deoxyadenosine in DNA + S-adenosyl-L-homocysteine + H(+). A beta subtype methylase, recognizes the double-stranded sequence 5'-ATGCAT-3' and methylates A-5. In Escherichia coli (strain K12), this protein is DNA adenine methyltransferase YhdJ (yhdJ).